Reading from the N-terminus, the 245-residue chain is AP-1-like transcription factor YAP7 (245 aa).

The tract at residues Met1–Glu144 is disordered. Polar residues predominate over residues Ser74 to Gln94. Composition is skewed to basic and acidic residues over residues Met95–Asp114 and Asn135–Glu144. Positions Val125–Ser188 constitute a bZIP domain. Residues Lys130 to Arg149 are basic motif. The tract at residues Leu153–Thr181 is leucine-zipper.

Belongs to the bZIP family. YAP subfamily. In terms of assembly, homodimer.

The protein resides in the nucleus. In terms of biological role, probable transcription activator linked to cell cycle that induces transcription activation of genes in the environmental stress response and metabolism control pathways, like the closely related YAP5. This chain is AP-1-like transcription factor YAP7 (YAP7), found in Saccharomyces cerevisiae (strain ATCC 204508 / S288c) (Baker's yeast).